Here is a 95-residue protein sequence, read N- to C-terminus: Aspartyl/glutamyl-tRNA(Asn/Gln) amidotransferase subunit C (95 aa).

This sequence belongs to the GatC family. Heterotrimer of A, B and C subunits.

It catalyses the reaction L-glutamyl-tRNA(Gln) + L-glutamine + ATP + H2O = L-glutaminyl-tRNA(Gln) + L-glutamate + ADP + phosphate + H(+). It carries out the reaction L-aspartyl-tRNA(Asn) + L-glutamine + ATP + H2O = L-asparaginyl-tRNA(Asn) + L-glutamate + ADP + phosphate + 2 H(+). Functionally, allows the formation of correctly charged Asn-tRNA(Asn) or Gln-tRNA(Gln) through the transamidation of misacylated Asp-tRNA(Asn) or Glu-tRNA(Gln) in organisms which lack either or both of asparaginyl-tRNA or glutaminyl-tRNA synthetases. The reaction takes place in the presence of glutamine and ATP through an activated phospho-Asp-tRNA(Asn) or phospho-Glu-tRNA(Gln). The polypeptide is Aspartyl/glutamyl-tRNA(Asn/Gln) amidotransferase subunit C (Chlorobium luteolum (strain DSM 273 / BCRC 81028 / 2530) (Pelodictyon luteolum)).